We begin with the raw amino-acid sequence, 350 residues long: Biotin synthase (350 aa).

The Radical SAM core domain maps to arginine 54–serine 278. [4Fe-4S] cluster-binding residues include cysteine 69, cysteine 73, and cysteine 76. Residues cysteine 113, cysteine 144, cysteine 204, and arginine 276 each coordinate [2Fe-2S] cluster.

It belongs to the radical SAM superfamily. Biotin synthase family. As to quaternary structure, homodimer. [4Fe-4S] cluster serves as cofactor. Requires [2Fe-2S] cluster as cofactor.

The catalysed reaction is (4R,5S)-dethiobiotin + (sulfur carrier)-SH + 2 reduced [2Fe-2S]-[ferredoxin] + 2 S-adenosyl-L-methionine = (sulfur carrier)-H + biotin + 2 5'-deoxyadenosine + 2 L-methionine + 2 oxidized [2Fe-2S]-[ferredoxin]. The protein operates within cofactor biosynthesis; biotin biosynthesis; biotin from 7,8-diaminononanoate: step 2/2. Catalyzes the conversion of dethiobiotin (DTB) to biotin by the insertion of a sulfur atom into dethiobiotin via a radical-based mechanism. The polypeptide is Biotin synthase (Neisseria meningitidis serogroup B (strain ATCC BAA-335 / MC58)).